The sequence spans 3253 residues: tRNA nuclease CdiA (3253 aa).

An N-terminal signal peptide occupies residues 1–32; sequence MHQPPVRFPYRLLSYLISTIIAGQPLLPAVGA. A two-partner system transport domain (TPS) region spans residues 36–322; sequence PQNGAGMDKA…AGGNLSVTGT (287 aa). Positions 351-1384 are FHA-1; that stretch reads GELTAGQNAM…ITIRTGHLLN (1034 aa). The receptor binding domain (RBD) stretch occupies residues 1385-1656; that stretch reads QREGINETKS…DLASGIVEGN (272 aa). Residues 1657–1841 are YP domain; sequence YPLPSGNNGY…LSPKDVTLQN (185 aa). Residues 1842-1902 form a periplasmic FHA-1 repeat (pFR) region; the sequence is GSIISGQNVH…GLKAMGDINN (61 aa). An FHA-2 region spans residues 1944-2548; sequence TYTGSIASVS…TSKYDSKQTS (605 aa). Disordered regions lie at residues 2228–2252, 2362–2410, 2483–2503, and 2687–2712; these read GSSK…TIGS, TGDP…GKNR, GSEK…GKTV, and IRDR…DSIS. Composition is skewed to polar residues over residues 2240-2252, 2368-2403, and 2490-2503; these read GTTQ…TIGS, TGVS…NLSV, and TEWT…GKTV. The pretoxin (PT) domain stretch occupies residues 2888–2930; the sequence is SDLSEEQKQTISTLATVSAGLAGGLTGNSSASAAVGAQSGKNA. Positions 2931-2934 match the VDNN CT cleavage motif motif; that stretch reads VDNN. Residues 2931–3253 form a C-terminal effector domain (CT) region; it reads VDNNYLSVSE…TGIVSNFHPK (323 aa).

It in the N-terminal section; belongs to the CdiA toxin family. In the C-terminal section; belongs to the bacterial EndoU family. In terms of assembly, forms a 1:1 complex with cognate immunity protein CdiI-STECO31. It depends on tRNase activity is metal-independent. as a cofactor. In terms of processing, the CT domain is cleaved upon binding to receptor Tsx on target cells.

The protein resides in the secreted. The protein localises to the target cell. Its subcellular location is the target cell cytoplasm. In terms of biological role, toxic component of a toxin-immunity protein module, which functions as a cellular contact-dependent growth inhibition (CDI) system. CDI modules allow bacteria to communicate with and inhibit the growth of closely related neighboring target bacteria in a contact-dependent fashion (target cell counts decrease 1000- to 10000-fold with this CDI). Uses outer membrane nucleoside transporter Tsx on target cells as a receptor. Gains access to the cytoplasm of target cells by using integral inner membrane protein PTS system glucose-specific EIICB component (ptsG). Targeting of the C-terminal domain (CT) domain (residues 2931-3253) in the absence of immunity protein inhibits cell growth and causes tRNA(UUC-Glu) cleavage; expression of cognate immunity protein CdiI-STECO31 neutralizes growth inhibition leaving tRNA(UUC-Glu) is intact, whereas non-cognate immunity proteins do not confer protection. The CT domain cleaves tRNA; it is most active against tRNA(UUC-Glu), but also has modest activity against tRNA(GUC-Asp), tRNA(UUG-Gln), tRNA(CCC-Gly), tRNA(UCC-Gly), tRNA(GCC-Gly), tRNA(UUU-Lys), tRNA(GGU-Thr) and tRNA(CCA-Trp); tRNA cleavage is inhibited by cognate immunity protein CdiI. Cleavage of tRNA(UUC-Glu) occurs in the anticodon loop between cytosine(37) and 2-methyladenosine(38) (C37-m2A38) and probably also occurs in the anticodon loop of other tRNAs as well. Its function is as follows. The CdiA protein is thought to be exported from the cell through the central lumen of CdiB, the other half of its two-partner system (TPS). The TPS domain probably remains associated with CdiB while the FHA-1 domain forms an extended filament (33 nm long) with the receptor-binding domain (RBD) at its extremity; in the secretion arrested state the C-terminus of the RBD and YP domains form a hairpin-like structure as the FHA-2, PT and CT domains are periplasmic. The YP domain is probably responsible for this arrest at the point where it re-enters the host cell periplasm. Upon binding to a target cell outer membrane receptor (Tsx for this CDI) a signal is transmitted to activate secretion. The filament becomes about 5 nm longer, the rest of CdiA is secreted and the FHA-2 domain becomes stably associated with the target cell's outer membrane where it facilitates entry of the toxic CT domain into the target cell periplasm. From there the toxic CT domain is cleaved and gains access to the target cell cytoplasm via an inner membrane protein (PTS system glucose-specific EIICB component, ptsG for this CDI). The protein is tRNA nuclease CdiA of Escherichia coli (strain STEC_O31).